The primary structure comprises 334 residues: Putative carboxypeptidase VC_A0337 (334 aa).

Residue Ser112 is the Nucleophile of the active site. Catalysis depends on charge relay system residues Glu234 and His302.

This sequence belongs to the peptidase S66 family.

The protein is Putative carboxypeptidase VC_A0337 of Vibrio cholerae serotype O1 (strain ATCC 39315 / El Tor Inaba N16961).